Consider the following 241-residue polypeptide: Carboxy-S-adenosyl-L-methionine synthase (241 aa).

S-adenosyl-L-methionine contacts are provided by residues tyrosine 38, 63–65, 88–89, 116–117, asparagine 131, and arginine 198; these read GCS, DN, and DI.

It belongs to the class I-like SAM-binding methyltransferase superfamily. Cx-SAM synthase family. Homodimer.

The catalysed reaction is prephenate + S-adenosyl-L-methionine = carboxy-S-adenosyl-L-methionine + 3-phenylpyruvate + H2O. Its function is as follows. Catalyzes the conversion of S-adenosyl-L-methionine (SAM) to carboxy-S-adenosyl-L-methionine (Cx-SAM). This Actinobacillus pleuropneumoniae serotype 5b (strain L20) protein is Carboxy-S-adenosyl-L-methionine synthase.